A 718-amino-acid chain; its full sequence is ADP-ribosylation factor-binding protein GGA3 (718 aa).

The VHS domain maps to 16 to 146 (ATNPSNRQED…MLKRQGIVQS (131 aa)). Phosphoserine is present on residues serine 159 and serine 275. The 128-residue stretch at 171–298 (DEEKSKLLAR…VINSYKTIIE (128 aa)) folds into the GAT domain. The segment at 299-588 (GQIVNGEVTT…VHVPLESIKP (290 aa)) is unstructured hinge. Composition is skewed to low complexity over residues 334-350 (APSNSSPALAPPTSGIP) and 360-369 (GPPRSRSSSQ). The interval 334–381 (APSNSSPALAPPTSGIPILPPPPQTSGPPRSRSSSQAEAPPGSDSTNN) is disordered. Positions 387–391 (DEELL) match the Autoinhibitory motif. 2 disordered regions span residues 395 to 455 (LTDP…MSQA) and 477 to 506 (SFMFSSGPAPALAPKAEPKGPEYPSSSTSH). One can recognise a GAE domain in the interval 589-710 (SSALPVTAYD…TELGEVDQFP (122 aa)).

It belongs to the GGA protein family. Monomer. Interacts with GGA1 and GGA2. Binds to clathrin and activated ARFs, such as ARF1, ARF5 and ARF6. Binds RABEP1 and RABGEF1. Interacts with the membrane proteins M6PR/CD-MPR and IGF2R/CI-MPR and the accessory proteins SYNRG, EPN4, NECAP1, NECAP2 and AFTPH/aftiphilin. Interacts with TSG101 and UBC. Interacts with ADRA2B. Interacts with NTRK1; the interaction is independent of NTRK1 activation and ubiquitination. Interacts (via VHS domain) with BACE1 (via DXXLL motif). Post-translationally, phosphorylated by CK2 and dephosphorylated by PP2A. Phosphorylation of GGA3 allows the internal DXXLL motif to bind the VHS domain and to inhibit the recognition of cargo signals. Ubiquitinated. In terms of processing, proteolytically cleaved during apoptosis by CASP3.

It is found in the golgi apparatus. Its subcellular location is the trans-Golgi network membrane. The protein localises to the endosome membrane. The protein resides in the early endosome membrane. It localises to the recycling endosome membrane. In terms of biological role, plays a role in protein sorting and trafficking between the trans-Golgi network (TGN) and endosomes. Mediates the ARF-dependent recruitment of clathrin to the TGN and binds ubiquitinated proteins and membrane cargo molecules with a cytosolic acidic cluster-dileucine (DXXLL) motif. Plays a role in protein sorting and trafficking between the trans-Golgi network (TGN) and endosomes. Mediates the ARF-dependent recruitment of clathrin to the TGN and binds ubiquitinated proteins and membrane cargo molecules with a cytosolic acidic cluster-dileucine (DXXLL) motif. Mediates export of the GPCR receptor ADRA2B to the cell surface. Involved in BACE1 transport and sorting as well as regulation of BACE1 protein levels. Regulates retrograde transport of BACE1 from endosomes to the trans-Golgi network via interaction through the VHS motif and dependent of BACE1 phosphorylation. Modulates BACE1 protein levels independently of the interaction between VHS domain and DXXLL motif through recognition of ubiquitination. Key player in a novel DXXLL-mediated endosomal sorting machinery to the recycling pathway that targets NTRK1 to the plasma membrane. The protein is ADP-ribosylation factor-binding protein GGA3 (Gga3) of Mus musculus (Mouse).